The following is a 103-amino-acid chain: Cell division protein FtsB (103 aa).

Topologically, residues 1-3 (MGK) are cytoplasmic. The chain crosses the membrane as a helical span at residues 4-21 (LTLLLLAILVWLQYSLWF). The Periplasmic portion of the chain corresponds to 22–103 (GKNGIHDYTR…RAQSAGQNNR (82 aa)). Residues 31-71 (RVNDDVAAQQATNAKLKARNDQLFAEIDDLNGGQEALEERA) are a coiled coil.

It belongs to the FtsB family. Part of a complex composed of FtsB, FtsL and FtsQ.

It localises to the cell inner membrane. Its function is as follows. Essential cell division protein. May link together the upstream cell division proteins, which are predominantly cytoplasmic, with the downstream cell division proteins, which are predominantly periplasmic. The polypeptide is Cell division protein FtsB (Escherichia coli O157:H7).